Here is a 231-residue protein sequence, read N- to C-terminus: Uracil-DNA glycosylase (231 aa).

Catalysis depends on D74, which acts as the Proton acceptor.

Belongs to the uracil-DNA glycosylase (UDG) superfamily. UNG family.

The protein localises to the cytoplasm. It catalyses the reaction Hydrolyzes single-stranded DNA or mismatched double-stranded DNA and polynucleotides, releasing free uracil.. Excises uracil residues from the DNA which can arise as a result of misincorporation of dUMP residues by DNA polymerase or due to deamination of cytosine. In Campylobacter jejuni (strain RM1221), this protein is Uracil-DNA glycosylase.